Consider the following 151-residue polypeptide: UPF0735 ACT domain-containing protein SSP1116 (151 aa).

The ACT domain maps to Thr-74–Met-149.

Belongs to the UPF0735 family.

The sequence is that of UPF0735 ACT domain-containing protein SSP1116 from Staphylococcus saprophyticus subsp. saprophyticus (strain ATCC 15305 / DSM 20229 / NCIMB 8711 / NCTC 7292 / S-41).